The sequence spans 454 residues: COBRA-like protein 6 (454 aa).

An N-terminal signal peptide occupies residues 1-24 (MGAMLNLLLVVTVILCSILSPTRF). N-linked (GlcNAc...) asparagine glycans are attached at residues N104, N191, N320, N355, and N391. The GPI-anchor amidated serine moiety is linked to residue S429. A propeptide spans 430-454 (SSSSAVISSVSVVFCFLLHHLLLLV) (removed in mature form).

This sequence belongs to the COBRA family. Expressed in flowers and siliques.

The protein localises to the cell membrane. This is COBRA-like protein 6 (COBL6) from Arabidopsis thaliana (Mouse-ear cress).